Consider the following 124-residue polypeptide: MADNLRSYLYKQLPSVEGLHAIVVTDRDGAPVIKVANDNAPEYALRPAFLSTFALATDQGSKLGLSKNKSIICYYSTYQIVQFNRLPLVISFIASSNANTGLIFSLEKELVPLIEELRQVVEVA.

The protein belongs to the LAMTOR3 family. In terms of assembly, part of the Ragulator complex composed of lamtor1, lamtor2, lamtor3, lamtor4 and lamtor5. The Ragulator complex interacts with slc38a9; the probable amino acid sensor. Component of the lysosomal folliculin complex (LFC).

It localises to the late endosome membrane. In terms of biological role, as part of the Ragulator complex it is involved in amino acid sensing and activation of mTORC1, a signaling complex promoting cell growth in response to growth factors, energy levels, and amino acids. Activated by amino acids through a mechanism involving the lysosomal V-ATPase, the Ragulator plays a dual role for the small GTPases Rag (RagA/RRAGA, RagB/RRAGB, RagC/RRAGC and/or RagD/RRAGD): it (1) acts as a guanine nucleotide exchange factor (GEF), activating the small GTPases Rag and (2) mediates recruitment of Rag GTPases to the lysosome membrane. Activated Ragulator and Rag GTPases function as a scaffold recruiting mTORC1 to lysosomes where it is in turn activated. This Danio rerio (Zebrafish) protein is Ragulator complex protein LAMTOR3 (lamtor3).